The sequence spans 273 residues: Ethanolamine ammonia-lyase small subunit (273 aa).

Adenosylcob(III)alamin-binding residues include V164, E185, and C214.

The protein belongs to the EutC family. As to quaternary structure, the basic unit is a heterodimer which dimerizes to form tetramers. The heterotetramers trimerize; 6 large subunits form a core ring with 6 small subunits projecting outwards. The cofactor is adenosylcob(III)alamin.

Its subcellular location is the bacterial microcompartment. The enzyme catalyses ethanolamine = acetaldehyde + NH4(+). The protein operates within amine and polyamine degradation; ethanolamine degradation. Functionally, catalyzes the deamination of various vicinal amino-alcohols to oxo compounds. Allows this organism to utilize ethanolamine as the sole source of nitrogen and carbon in the presence of external vitamin B12. The polypeptide is Ethanolamine ammonia-lyase small subunit (Pseudomonas aeruginosa (strain LESB58)).